The sequence spans 190 residues: NADH-quinone oxidoreductase subunit B (190 aa).

[4Fe-4S] cluster contacts are provided by Cys69, Cys70, Cys134, and Cys164.

Belongs to the complex I 20 kDa subunit family. As to quaternary structure, NDH-1 is composed of 14 different subunits. Subunits NuoB, C, D, E, F, and G constitute the peripheral sector of the complex. It depends on [4Fe-4S] cluster as a cofactor.

It localises to the cell inner membrane. It carries out the reaction a quinone + NADH + 5 H(+)(in) = a quinol + NAD(+) + 4 H(+)(out). NDH-1 shuttles electrons from NADH, via FMN and iron-sulfur (Fe-S) centers, to quinones in the respiratory chain. Couples the redox reaction to proton translocation (for every two electrons transferred, four hydrogen ions are translocated across the cytoplasmic membrane), and thus conserves the redox energy in a proton gradient. In Hyphomonas neptunium (strain ATCC 15444), this protein is NADH-quinone oxidoreductase subunit B.